A 352-amino-acid polypeptide reads, in one-letter code: N-terminal EF-hand calcium-binding protein 1 (352 aa).

S4 is subject to Phosphoserine. EF-hand domains follow at residues 26–61 (KGMS…GVLS) and 60–95 (LSGE…HLGE). The Ca(2+) site is built by D39, N41, D43, K45, and E50. A coiled-coil region spans residues 135–163 (LLKETLNQLQSLQNSLECAMETTEEQTRQ). The tract at residues 155–202 (ETTEEQTRQERQGPSKPEVLSIQWPGKRSSRRVQRHNSFSPNSPQFNV) is disordered. Positions 190–202 (HNSFSPNSPQFNV) are enriched in polar residues. A phosphoserine mark is found at S192 and S197. Positions 209 to 275 (EEDNQWMTQI…EEFQLALKHY (67 aa)) form a coiled coil. The 89-residue stretch at 252-340 (MLVQRQMSVT…LETPELTSTM (89 aa)) folds into the ABM domain.

In terms of assembly, interacts with STX1. May interact with CPNE6. In terms of tissue distribution, expressed in brain (at protein level). Expressed in the cerebral cortex only in layer 4, thalamic nuclei (the mediodorsal nucleus), hippocampus (a small band of pyramidal neurons at the boundary between CA1 and CA3), interneurons interspersed throughout the hippocampus proper, interneurons in the hilus, bodies of the neurons but also their dendritic projections (at protein level).

Its subcellular location is the cytoplasm. The polypeptide is N-terminal EF-hand calcium-binding protein 1 (Necab1) (Mus musculus (Mouse)).